Here is a 622-residue protein sequence, read N- to C-terminus: Threonine--tRNA ligase (622 aa).

Residues 1 to 141 (MKTLLIHSDY…SRKITTERKE (141 aa)) form an editing domain region. The tract at residues 199–498 (PHVKYIKEKE…TLENKPPALP (300 aa)) is catalytic. Residues Cys-291, His-343, and His-467 each coordinate Zn(2+).

It belongs to the class-II aminoacyl-tRNA synthetase family. As to quaternary structure, homodimer. Zn(2+) is required as a cofactor.

It localises to the cytoplasm. The catalysed reaction is tRNA(Thr) + L-threonine + ATP = L-threonyl-tRNA(Thr) + AMP + diphosphate + H(+). Its function is as follows. Catalyzes the attachment of threonine to tRNA(Thr) in a two-step reaction: L-threonine is first activated by ATP to form Thr-AMP and then transferred to the acceptor end of tRNA(Thr). Also edits incorrectly charged L-seryl-tRNA(Thr). The sequence is that of Threonine--tRNA ligase from Methanococcus maripaludis (strain C5 / ATCC BAA-1333).